We begin with the raw amino-acid sequence, 505 residues long: MSGASSSEQNNNSYETKTPNLRMSEKKCSWASYMTNSPTLIVMIGLPARGKTYVSKKLTRYLNWIGVPTKVFNLGVYRREAVKSYKSYDFFRHDNEEAMKIRKQCALVALEDVKAYLTEENGQIAVFDATNTTRERRDMILNFAEQNSFKVFFVESVCDDPDVIAANILEVKVSSPDYPERNRENVMEDFLKRIECYKVTYRPLDPDNYDKDLSFIKVINVGQRFLVNRVQDYIQSKIVYYLMNIHVQPRTIYLCRHGESEFNLLGKIGGDSGLSVRGKQFAQALRKFLEEQEITDLKVWTSQLKRTIQTAESLGVPYEQWKILNEIDAGVCEEMTYAEIEKRYPEEFALRDQEKYLYRYPGGESYQDLVQRLEPVIMELERQGNVLVISHQAVMRCLLAYFLDKGADELPYLRCPLHTIFKLTPVAYGCKVETIKLNVEAVNTHRDKPTNNFPKNQTPVRMRRNSFTPLSSSNTIRRPRNYSVGSRPLKPLSPLRAQDMQEGAD.

The disordered stretch occupies residues 1-20 (MSGASSSEQNNNSYETKTPN). N-acetylserine is present on Ser-2. The segment at 2–248 (SGASSSEQNN…VYYLMNIHVQ (247 aa)) is 6-phosphofructo-2-kinase. Ser-29 is modified (phosphoserine; by PKA). Position 45–53 (45–53 (GLPARGKTY)) interacts with ATP. Beta-D-fructose 6-phosphate-binding residues include Arg-78 and Arg-102. Asp-128 is an active-site residue. 2 residues coordinate beta-D-fructose 6-phosphate: Thr-130 and Arg-136. The active site involves Cys-158. Residue 167-172 (NILEVK) coordinates ATP. Positions 172, 193, and 197 each coordinate beta-D-fructose 6-phosphate. Residues 249 to 505 (PRTIYLCRHG…RAQDMQEGAD (257 aa)) form a fructose-2,6-bisphosphatase region. A beta-D-fructose 2,6-bisphosphate-binding site is contributed by Arg-256. The active-site Tele-phosphohistidine intermediate is His-257. Positions 263 and 269 each coordinate beta-D-fructose 2,6-bisphosphate. Residue Glu-326 is the Proton donor/acceptor of the active site. Residues Tyr-337, Arg-351, Lys-355, Tyr-366, Gln-392, and Arg-396 each contribute to the beta-D-fructose 2,6-bisphosphate site. 348–351 (FALR) is a binding site for ATP. ATP is bound by residues 392 to 396 (QAVMR) and Tyr-428. The interval 445–505 (HRDKPTNNFP…RAQDMQEGAD (61 aa)) is disordered. The span at 450–476 (TNNFPKNQTPVRMRRNSFTPLSSSNTI) shows a compositional bias: polar residues. Phosphoserine; by AMPK is present on Ser-466. Residues Thr-468 and Thr-475 each carry the phosphothreonine modification. Ser-483 carries the post-translational modification Phosphoserine; by BRAF. Residues Ser-486 and Ser-493 each carry the phosphoserine modification.

It in the C-terminal section; belongs to the phosphoglycerate mutase family. As to quaternary structure, homodimer. Forms a heterodimer with PFKFB3. Phosphorylation by AMPK stimulates activity. Heart.

The catalysed reaction is beta-D-fructose 2,6-bisphosphate + H2O = beta-D-fructose 6-phosphate + phosphate. It catalyses the reaction beta-D-fructose 6-phosphate + ATP = beta-D-fructose 2,6-bisphosphate + ADP + H(+). With respect to regulation, phosphorylation results in the activation of the kinase activity. Functionally, synthesis and degradation of fructose 2,6-bisphosphate. In Homo sapiens (Human), this protein is 6-phosphofructo-2-kinase/fructose-2,6-bisphosphatase 2.